The sequence spans 254 residues: GTP cyclohydrolase III (254 aa).

The protein belongs to the archaeal-type GTP cyclohydrolase family.

It carries out the reaction GTP + 3 H2O = 2-amino-5-formylamino-6-(5-phospho-D-ribosylamino)pyrimidin-4(3H)-one + 2 phosphate + 2 H(+). In terms of biological role, catalyzes the formation of 2-amino-5-formylamino-6-ribofuranosylamino-4(3H)-pyrimidinone ribonucleotide monophosphate and inorganic phosphate from GTP. Also has an independent pyrophosphate phosphohydrolase activity. In Methanobrevibacter smithii (strain ATCC 35061 / DSM 861 / OCM 144 / PS), this protein is GTP cyclohydrolase III.